The sequence spans 78 residues: Pigment-dispersing hormone 1 peptides (78 aa).

Residues 1–22 (MRSSVIVAVLVVVALAALLTQG) form the signal peptide. Ala75 is modified (alanine amide).

Belongs to the arthropod PDH family. In terms of tissue distribution, eyestalk sinus gland.

Its subcellular location is the secreted. In terms of biological role, the pigment-dispersing hormone causes the migration of the distal retinal pigment into the proximal end of the pigment chromatophore cells and thus decreases the amount of light entering the retinulas. May also function as a neurotransmitter and/or neuromodulator. The polypeptide is Pigment-dispersing hormone 1 peptides (PDH1) (Callinectes sapidus (Blue crab)).